The sequence spans 771 residues: DNA helicase/primase complex-associated protein (771 aa).

The protein belongs to the herpesviridae HEPA family. As to quaternary structure, associates with the primase and the helicase to form the helicase-primase complex. Interacts with the origin-binding protein. Interacts with the polymerase catalytic subunit.

It localises to the host nucleus. Component of the helicase/primase complex. Unwinds the DNA at the replication forks and generates single-stranded DNA for both leading and lagging strand synthesis. The primase synthesizes short RNA primers on the lagging strand that the polymerase presumably elongates using dNTPs. The primase-associated factor has no known catalytic activity in the complex and may serve to facilitate the formation of the replisome by directly interacting with the origin-binding protein and the polymerase. The polypeptide is DNA helicase/primase complex-associated protein (Homo sapiens (Human)).